The primary structure comprises 317 residues: MWLYLAAFVGLYYLLHWYRERQVVSHLQDKYVFITGCDSGFGNLLARQLDARGLRVLAACLTEKGAEQLRGQTSDRLETVTLDVTKMESIAAATQWVKEHVGDRGLWGLVNNAGILTPITLCEWLNTEDSMNMLKVNLIGVIQVTLSMLPLVRRARGRIVNVSSILGRVAFFVGGYCVSKYGVEAFSDILRREIQHFGVKISIVEPGYFRTGMTNMTQSLERMKQSWKEAPKHIKETYGQQYFDALYNIMKEGLLNCSTNLNLVTDCMEHALTSVHPRTRYSAGWDAKFFFIPLSYLPTSLADYILTRSWPKPAQAV.

An N-terminal signal peptide occupies residues 1–17; it reads MWLYLAAFVGLYYLLHW. Residue 33 to 57 coordinates NAD(+); that stretch reads FITGCDSGFGNLLARQLDARGLRVL. N-linked (GlcNAc...) asparagine glycosylation occurs at N161. S164 lines the substrate pocket. Catalysis depends on Y176, which acts as the Proton acceptor. N215 and N256 each carry an N-linked (GlcNAc...) asparagine glycan.

The protein belongs to the short-chain dehydrogenases/reductases (SDR) family. As to expression, detected in liver and prostate (at protein level). Detected in adult liver, lung, brain, placenta, prostate, adrenal gland, testis, mammary gland, spleen, spinal cord and uterus. Detected in caudate nucleus, and at lower levels in amygdala, corpus callosum, hippocampus, substantia nigra and thalamus. Detected in fetal lung, liver and brain.

It localises to the microsome membrane. Its subcellular location is the early endosome membrane. The catalysed reaction is all-trans-retinol--[retinol-binding protein] + NAD(+) = all-trans-retinal--[retinol-binding protein] + NADH + H(+). It carries out the reaction all-trans-retinol + NAD(+) = all-trans-retinal + NADH + H(+). It catalyses the reaction androsterone + NAD(+) = 5alpha-androstan-3,17-dione + NADH + H(+). The enzyme catalyses testosterone + NAD(+) = androst-4-ene-3,17-dione + NADH + H(+). The catalysed reaction is 5alpha-androstane-3alpha,17beta-diol + NAD(+) = 17beta-hydroxy-5alpha-androstan-3-one + NADH + H(+). It carries out the reaction 17beta-estradiol + NAD(+) = estrone + NADH + H(+). It catalyses the reaction 17beta-estradiol + NADP(+) = estrone + NADPH + H(+). The enzyme catalyses 3alpha-hydroxy-5alpha-pregnan-20-one + NAD(+) = 5alpha-pregnane-3,20-dione + NADH + H(+). The catalysed reaction is 5alpha-androstane-3beta,17beta-diol + NAD(+) = 17beta-hydroxy-5alpha-androstan-3-one + NADH + H(+). It carries out the reaction 3beta-hydroxy-5alpha-androstan-17-one + NAD(+) = 5alpha-androstan-3,17-dione + NADH + H(+). NAD-dependent oxidoreductase with broad substrate specificity that shows both oxidative and reductive activity (in vitro). Has 17-beta-hydroxysteroid dehydrogenase activity towards various steroids (in vitro). Converts 5-alpha-androstan-3-alpha,17-beta-diol to androsterone and estradiol to estrone (in vitro). Has 3-alpha-hydroxysteroid dehydrogenase activity towards androsterone (in vitro). Has retinol dehydrogenase activity towards all-trans-retinol (in vitro). Can convert androsterone to epi-androsterone. Androsterone is first oxidized to 5-alpha-androstane-3,17-dione and then reduced to epi-andosterone. Can act on both C-19 and C-21 3-alpha-hydroxysteroids. The protein is 17-beta-hydroxysteroid dehydrogenase type 6 (HSD17B6) of Homo sapiens (Human).